The chain runs to 204 residues: Methylthioribulose-1-phosphate dehydratase (204 aa).

2 residues coordinate Zn(2+): histidine 95 and histidine 97.

Belongs to the aldolase class II family. MtnB subfamily. It depends on Zn(2+) as a cofactor.

The catalysed reaction is 5-(methylsulfanyl)-D-ribulose 1-phosphate = 5-methylsulfanyl-2,3-dioxopentyl phosphate + H2O. Its pathway is amino-acid biosynthesis; L-methionine biosynthesis via salvage pathway; L-methionine from S-methyl-5-thio-alpha-D-ribose 1-phosphate: step 2/6. Catalyzes the dehydration of methylthioribulose-1-phosphate (MTRu-1-P) into 2,3-diketo-5-methylthiopentyl-1-phosphate (DK-MTP-1-P). This chain is Methylthioribulose-1-phosphate dehydratase, found in Parvibaculum lavamentivorans (strain DS-1 / DSM 13023 / NCIMB 13966).